The sequence spans 86 residues: Mitochondrial import inner membrane translocase subunit Tim10 (86 aa).

Residues 29–54 (CQAKCIATAFRESELTKGEAVCLDRC) carry the Twin CX3C motif motif. 2 cysteine pairs are disulfide-bonded: cysteine 29–cysteine 54 and cysteine 33–cysteine 50.

It belongs to the small Tim family. In terms of assembly, heterohexamer; composed of 3 copies of tim-9/tin-9.1 and 3 copies of tim-10/tin-10, named soluble 70 kDa complex. The complex associates with the tim-22 component of the TIM22 complex. Interacts with multi-pass transmembrane proteins in transit.

The protein localises to the mitochondrion inner membrane. Functionally, mitochondrial intermembrane chaperone that participates in the import and insertion of multi-pass transmembrane proteins into the mitochondrial inner membrane. May also be required for the transfer of beta-barrel precursors from the TOM complex to the sorting and assembly machinery (SAM complex) of the outer membrane. Acts as a chaperone-like protein that protects the hydrophobic precursors from aggregation and guide them through the mitochondrial intermembrane space. The polypeptide is Mitochondrial import inner membrane translocase subunit Tim10 (tin-10) (Caenorhabditis elegans).